The chain runs to 435 residues: uncharacterized protein (435 aa).

Helical transmembrane passes span Ile-9–Ala-29, Val-57–Met-77, Thr-110–Met-130, Ala-146–Val-166, Val-176–Thr-196, Leu-226–Pro-246, Val-280–Met-300, Trp-321–Thr-341, Ala-343–Val-363, Ile-367–Phe-387, and Phe-408–Leu-428.

This sequence belongs to the YiaN/YgiK family.

The protein resides in the cell inner membrane. This is an uncharacterized protein from Salmonella typhimurium (strain LT2 / SGSC1412 / ATCC 700720).